Consider the following 121-residue polypeptide: Large ribosomal subunit protein bL12 (121 aa).

This sequence belongs to the bacterial ribosomal protein bL12 family. Homodimer. Part of the ribosomal stalk of the 50S ribosomal subunit. Forms a multimeric L10(L12)X complex, where L10 forms an elongated spine to which 2 to 4 L12 dimers bind in a sequential fashion. Binds GTP-bound translation factors.

Forms part of the ribosomal stalk which helps the ribosome interact with GTP-bound translation factors. Is thus essential for accurate translation. In Clostridium perfringens (strain 13 / Type A), this protein is Large ribosomal subunit protein bL12.